The primary structure comprises 151 residues: Large ribosomal subunit protein bL9 (151 aa).

This sequence belongs to the bacterial ribosomal protein bL9 family.

Its function is as follows. Binds to the 23S rRNA. The sequence is that of Large ribosomal subunit protein bL9 from Mycolicibacterium smegmatis (strain ATCC 700084 / mc(2)155) (Mycobacterium smegmatis).